The primary structure comprises 291 residues: Elongation factor Ts (291 aa).

An involved in Mg(2+) ion dislocation from EF-Tu region spans residues T80–V83.

The protein belongs to the EF-Ts family.

The protein resides in the cytoplasm. Its function is as follows. Associates with the EF-Tu.GDP complex and induces the exchange of GDP to GTP. It remains bound to the aminoacyl-tRNA.EF-Tu.GTP complex up to the GTP hydrolysis stage on the ribosome. The protein is Elongation factor Ts of Limosilactobacillus reuteri (strain DSM 20016) (Lactobacillus reuteri).